We begin with the raw amino-acid sequence, 549 residues long: Undecaprenyl phosphate-alpha-4-amino-4-deoxy-L-arabinose arabinosyl transferase (549 aa).

The next 12 membrane-spanning stretches (helical) occupy residues 9–29 (LLLI…GLWI), 80–100 (LFGV…LAYL), 112–132 (SLAC…SGYA), 136–156 (PQFT…LDAG), 176–196 (FLTK…PYML), 204–224 (LLGY…PWAL), 256–276 (PWWF…GLLP), 288–308 (QAPV…FSLS), 312–332 (LPTY…HALV), 346–366 (NGLL…YLQL), 376–396 (FELF…LAQW), and 402–422 (AWAA…AAMP).

Belongs to the glycosyltransferase 83 family.

The protein resides in the cell inner membrane. It carries out the reaction 4-amino-4-deoxy-alpha-L-arabinopyranosyl di-trans,octa-cis-undecaprenyl phosphate + lipid IVA = lipid IIA + di-trans,octa-cis-undecaprenyl phosphate.. Its pathway is lipopolysaccharide metabolism; 4-amino-4-deoxy-beta-L-arabinose-lipid A biosynthesis. Its function is as follows. Catalyzes the transfer of the L-Ara4N moiety of the glycolipid undecaprenyl phosphate-alpha-L-Ara4N to lipid A. The modified arabinose is attached to lipid A and is required for resistance to polymyxin and cationic antimicrobial peptides. The polypeptide is Undecaprenyl phosphate-alpha-4-amino-4-deoxy-L-arabinose arabinosyl transferase (Pseudomonas aeruginosa (strain ATCC 15692 / DSM 22644 / CIP 104116 / JCM 14847 / LMG 12228 / 1C / PRS 101 / PAO1)).